A 1497-amino-acid polypeptide reads, in one-letter code: DNA-directed RNA polymerase subunit beta' (1497 aa).

4 residues coordinate Zn(2+): Cys67, Cys69, Cys82, and Cys85. Residues Asp499, Asp501, and Asp503 each coordinate Mg(2+). Positions 867, 943, 950, and 953 each coordinate Zn(2+). Residues 1476-1497 (ESNATERVVEEPATREGFANER) form a disordered region. A compositionally biased stretch (basic and acidic residues) spans 1482–1497 (RVVEEPATREGFANER).

It belongs to the RNA polymerase beta' chain family. The RNAP catalytic core consists of 2 alpha, 1 beta, 1 beta' and 1 omega subunit. When a sigma factor is associated with the core the holoenzyme is formed, which can initiate transcription. Requires Mg(2+) as cofactor. Zn(2+) is required as a cofactor.

It carries out the reaction RNA(n) + a ribonucleoside 5'-triphosphate = RNA(n+1) + diphosphate. DNA-dependent RNA polymerase catalyzes the transcription of DNA into RNA using the four ribonucleoside triphosphates as substrates. This Pelodictyon phaeoclathratiforme (strain DSM 5477 / BU-1) protein is DNA-directed RNA polymerase subunit beta'.